The following is a 167-amino-acid chain: Ribosome rescue factor SmrB (167 aa).

Residues 91–166 form the Smr domain; the sequence is LDLHGLTREQ…GEAAILILVD (76 aa).

It belongs to the SmrB family. Associates with collided ribosomes, but not with correctly translating polysomes.

In terms of biological role, acts as a ribosome collision sensor. Detects stalled/collided disomes (pairs of ribosomes where the leading ribosome is stalled and a second ribosome has collided with it) and endonucleolytically cleaves mRNA at the 5' boundary of the stalled ribosome. Stalled/collided disomes form a new interface (primarily via the 30S subunits) that binds SmrB. Cleaved mRNA becomes available for tmRNA ligation, leading to ribosomal subunit dissociation and rescue of stalled ribosomes. The sequence is that of Ribosome rescue factor SmrB from Haemophilus influenzae (strain ATCC 51907 / DSM 11121 / KW20 / Rd).